A 425-amino-acid chain; its full sequence is ATP-dependent RNA helicase eIF4A (425 aa).

The Q motif signature appears at 38–66 (DTWEDYGLKEDLLKGIYSIGFETPSFIQK). The 173-residue stretch at 69–241 (IQPIIDGRDI…EEILINPVII (173 aa)) folds into the Helicase ATP-binding domain. 82–89 (AQSGTGKT) contacts ATP. The short motif at 187 to 190 (DEAD) is the DEAD box element. The region spanning 252 to 425 (GIRQYFIDLR…KELPADFSFQ (174 aa)) is the Helicase C-terminal domain.

Belongs to the DEAD box helicase family. eIF4A subfamily. Component of the eIF4F complex, which composition varies with external and internal environmental conditions. It is composed of at least eIF4A, eIF4E and eIF4G.

The protein localises to the cytoplasm. The enzyme catalyses ATP + H2O = ADP + phosphate + H(+). Its function is as follows. ATP-dependent RNA helicase which is a subunit of the eIF4F complex involved in cap recognition and is required for mRNA binding to ribosome. In the current model of translation initiation, eIF4A unwinds RNA secondary structures in the 5'-UTR of mRNAs which is necessary to allow efficient binding of the small ribosomal subunit, and subsequent scanning for the initiator codon. The sequence is that of ATP-dependent RNA helicase eIF4A (TIF1) from Encephalitozoon cuniculi (strain GB-M1) (Microsporidian parasite).